A 183-amino-acid chain; its full sequence is Adenine phosphoribosyltransferase (183 aa).

This sequence belongs to the purine/pyrimidine phosphoribosyltransferase family. In terms of assembly, homodimer.

The protein resides in the cytoplasm. The enzyme catalyses AMP + diphosphate = 5-phospho-alpha-D-ribose 1-diphosphate + adenine. Its pathway is purine metabolism; AMP biosynthesis via salvage pathway; AMP from adenine: step 1/1. Its function is as follows. Catalyzes a salvage reaction resulting in the formation of AMP, that is energically less costly than de novo synthesis. This chain is Adenine phosphoribosyltransferase, found in Shewanella pealeana (strain ATCC 700345 / ANG-SQ1).